We begin with the raw amino-acid sequence, 997 residues long: Autophagy-related protein 9 (997 aa).

Residues Met-1 to Gly-318 lie on the Cytoplasmic side of the membrane. Ser-19 carries the phosphoserine modification. A compositionally biased stretch (polar residues) spans Val-29–Ser-39. Residues Val-29–Glu-88 form a disordered region. Residues Thr-79–Glu-88 show a composition bias toward acidic residues. Residues Lys-113 and Lys-121 each participate in a glycyl lysine isopeptide (Lys-Gly) (interchain with G-Cter in ubiquitin) cross-link. Residue Ser-122 is modified to Phosphoserine. 2 disordered regions span residues Leu-127 to Asp-159 and His-214 to His-234. Lys-138 participates in a covalent cross-link: Glycyl lysine isopeptide (Lys-Gly) (interchain with G-Cter in ubiquitin). A phosphoserine mark is found at Ser-143 and Ser-144. The span at Ser-144–Asp-159 shows a compositional bias: acidic residues. The segment covering Ala-221–Lys-233 has biased composition (polar residues). A helical transmembrane segment spans residues Phe-319–Val-339. Residues Ser-340–Lys-376 lie on the Lumenal side of the membrane. The chain crosses the membrane as a helical span at residues Phe-377–Val-397. Topologically, residues Gln-398–Ala-538 are cytoplasmic. Residues Gly-539–Phe-559 lie within the membrane without spanning it. Residues Arg-560–Leu-620 are Cytoplasmic-facing. A helical transmembrane segment spans residues Phe-621 to Val-641. The Lumenal portion of the chain corresponds to Phe-642 to Arg-656. Residue Ser-657 is modified to Phosphoserine. The helical transmembrane segment at Ser-657–Thr-677 threads the bilayer. Over Gln-678–Arg-723 the chain is Cytoplasmic. Lys-701 is covalently cross-linked (Glycyl lysine isopeptide (Lys-Gly) (interchain with G-Cter in ubiquitin)). An intramembrane segment occupies Ile-724 to Ser-744. The Cytoplasmic segment spans residues Leu-745 to Arg-997. A phosphoserine mark is found at Ser-787 and Ser-792. Thr-794 carries the phosphothreonine modification. The residue at position 802 (Ser-802) is a Phosphoserine. At Thr-804 the chain carries Phosphothreonine. A phosphoserine mark is found at Ser-831, Ser-842, Ser-864, Ser-948, and Ser-969.

It belongs to the ATG9 family. As to quaternary structure, homotrimer; forms a homotrimer with a central pore that forms a path between the two membrane leaflets. Interacts with ATG23 and ATG27 to form a cycling complex for trafficking to the PAS. Interacts (via N-terminus) with ATG11, required for recruitment of ATG9 to the PAS for the Cvt pathway during nutrient-rich conditions. Interacts (via N-terminus) with ATG17; required for recruitment to the PAS during autophagy and starved conditions. Interacts with ATG2 and ATG18; required for the retrieval of ATG9 from the PAS to the cytoplasmic pool. Interacts with ATG41. Interacts with the conserved oligomeric Golgi (COG) complex subunits COG3 and COG4. Interacts with TRS85. In terms of processing, phosphorylated by ATG1; phosphorylation is required for autophagy and cytoplasm to vacuole transport (Cvt) vesicle formation. Phosphorylation by ATG1 regulates ATG18 interaction and preautophagosome elongation. Phosphorylation at Ser-122 is required for selective autophagy by regulating anterograde trafficking and interaction with ATG23 and ATG27. Phosphorylation at Ser-122 prevents ubiquitination by the SCF(MET30) complex. Post-translationally, ubiquitinated by the SCF(MET30) complex in normal conditions, leading to its degradation by the proteasome, thereby preventing inappropriate induction of autophagy. Ubiquitination by the SCF(MET30) complex is prevented by phosphorylation at Ser-122.

It localises to the preautophagosomal structure membrane. The protein resides in the cytoplasmic vesicle membrane. Its subcellular location is the golgi apparatus membrane. The protein localises to the endoplasmic reticulum membrane. It is found in the mitochondrion membrane. It carries out the reaction a 1,2-diacyl-sn-glycero-3-phosphocholine(in) = a 1,2-diacyl-sn-glycero-3-phosphocholine(out). The enzyme catalyses a 1,2-diacyl-sn-glycero-3-phospho-L-serine(in) = a 1,2-diacyl-sn-glycero-3-phospho-L-serine(out). It catalyses the reaction a 1,2-diacyl-sn-glycero-3-phosphoethanolamine(in) = a 1,2-diacyl-sn-glycero-3-phosphoethanolamine(out). The catalysed reaction is a 1,2-diacyl-sn-glycero-3-phospho-(1D-myo-inositol-3-phosphate)(in) = a 1,2-diacyl-sn-glycero-3-phospho-(1D-myo-inositol-3-phosphate)(out). Phospholipid scramblase involved in autophagy and cytoplasm to vacuole transport (Cvt) vesicle formation. Cycles between the preautophagosomal structure/phagophore assembly site (PAS) and the cytoplasmic vesicle pool and supplies membrane for the growing autophagosome. Lipid scramblase activity plays a key role in preautophagosomal structure/phagophore assembly by distributing the phospholipids that arrive through ATG2 from the cytoplasmic to the luminal leaflet of the bilayer, thereby driving autophagosomal membrane expansion. Required for mitophagy. Also involved in endoplasmic reticulum-specific autophagic process and is essential for the survival of cells subjected to severe ER stress. Different machineries are required for anterograde trafficking to the PAS during either the Cvt pathway or bulk autophagy and for retrograde trafficking. Recruits vesicle-tethering proteins TRS85 and YPT1 to the autophagosome formation site. Also recruits ATG23 and ATG8 to the PAS. The sequence is that of Autophagy-related protein 9 from Saccharomyces cerevisiae (strain YJM789) (Baker's yeast).